The following is a 138-amino-acid chain: Low molecular weight protein-tyrosine-phosphatase PtpB (138 aa).

The Nucleophile role is filled by Cys7. The active site involves Arg13. Asp111 functions as the Proton donor in the catalytic mechanism.

The protein belongs to the low molecular weight phosphotyrosine protein phosphatase family.

The enzyme catalyses O-phospho-L-tyrosyl-[protein] + H2O = L-tyrosyl-[protein] + phosphate. In terms of biological role, dephosphorylates the phosphotyrosine-containing proteins. The chain is Low molecular weight protein-tyrosine-phosphatase PtpB (ptpB) from Staphylococcus haemolyticus (strain JCSC1435).